Consider the following 232-residue polypeptide: MNHFTFTDRTVVAELVAKMLWEIKAVHFNSESPYTFASGMKSPVYIDMRKLISFPRIRSAAMDFAAAAVMREAGFEKFDCVAGGETAGIPFAAFLAERLGLPMIYCRKKPKGHGRNAQIEGHMPDGARVLVIEDLTTAGGSMFTFIDAIRAAGGIVDHGIALFYYGIFEEAEARFANGNVKLHYLTTWRDVLAVARAEKLFDEKTLSGVEAFLDNPLPWSAKHGGVSELPQS.

5-phospho-alpha-D-ribose 1-diphosphate contacts are provided by residues Arg107, Lys108, Lys111, His113, and 133–141; that span reads EDLTTAGGS. Residue Thr137 participates in orotate binding.

The protein belongs to the purine/pyrimidine phosphoribosyltransferase family. PyrE subfamily. As to quaternary structure, homodimer. Requires Mg(2+) as cofactor.

It carries out the reaction orotidine 5'-phosphate + diphosphate = orotate + 5-phospho-alpha-D-ribose 1-diphosphate. The protein operates within pyrimidine metabolism; UMP biosynthesis via de novo pathway; UMP from orotate: step 1/2. Functionally, catalyzes the transfer of a ribosyl phosphate group from 5-phosphoribose 1-diphosphate to orotate, leading to the formation of orotidine monophosphate (OMP). This Agrobacterium fabrum (strain C58 / ATCC 33970) (Agrobacterium tumefaciens (strain C58)) protein is Orotate phosphoribosyltransferase.